A 614-amino-acid chain; its full sequence is UvrABC system protein C (614 aa).

The GIY-YIG domain occupies 20-98; it reads TAPGVYRMYA…IKSLSPRYNV (79 aa). The region spanning 207-242 is the UVR domain; sequence DELTRELGEQMQAASEALEFEQAARLRDLISSLRSM.

This sequence belongs to the UvrC family. As to quaternary structure, interacts with UvrB in an incision complex.

The protein resides in the cytoplasm. In terms of biological role, the UvrABC repair system catalyzes the recognition and processing of DNA lesions. UvrC both incises the 5' and 3' sides of the lesion. The N-terminal half is responsible for the 3' incision and the C-terminal half is responsible for the 5' incision. This chain is UvrABC system protein C, found in Stenotrophomonas maltophilia (strain R551-3).